Reading from the N-terminus, the 121-residue chain is Large ribosomal subunit protein uL14 (121 aa).

The protein belongs to the universal ribosomal protein uL14 family. In terms of assembly, part of the 50S ribosomal subunit. Forms a cluster with proteins L3 and L19. In the 70S ribosome, L14 and L19 interact and together make contacts with the 16S rRNA in bridges B5 and B8.

In terms of biological role, binds to 23S rRNA. Forms part of two intersubunit bridges in the 70S ribosome. The polypeptide is Large ribosomal subunit protein uL14 (Phocaeicola vulgatus (strain ATCC 8482 / DSM 1447 / JCM 5826 / CCUG 4940 / NBRC 14291 / NCTC 11154) (Bacteroides vulgatus)).